Reading from the N-terminus, the 122-residue chain is Basic phospholipase A2 Cdr-13 (122 aa).

7 cysteine pairs are disulfide-bonded: Cys-26/Cys-115, Cys-28/Cys-44, Cys-43/Cys-95, Cys-49/Cys-122, Cys-50/Cys-88, Cys-57/Cys-81, and Cys-75/Cys-86. Residues Tyr-27, Gly-29, and Gly-31 each contribute to the Ca(2+) site. Residue His-47 is part of the active site. Asp-48 serves as a coordination point for Ca(2+). The active site involves Asp-89.

Requires Ca(2+) as cofactor. In terms of tissue distribution, expressed by the venom gland.

The protein resides in the secreted. The enzyme catalyses a 1,2-diacyl-sn-glycero-3-phosphocholine + H2O = a 1-acyl-sn-glycero-3-phosphocholine + a fatty acid + H(+). In terms of biological role, snake venom phospholipase A2 (PLA2) that induces myonecrosis and edema upon subcutaneous injections in mice. In vitro, causes a potent blockade of neuromuscular transmission in young chicken biventer cervicis preparation and produces cytotoxicity in murine C2C12 skeletal muscle myotubes and lack cytolytic activity upon myoblasts in vitro. PLA2 catalyzes the calcium-dependent hydrolysis of the 2-acyl groups in 3-sn-phosphoglycerides. This Crotalus durissus ruruima (South American rattlesnake) protein is Basic phospholipase A2 Cdr-13.